The primary structure comprises 548 residues: MFS-type transporter TOXA (548 aa).

Over residues 1–12 (MDEQIVSASSNV) the composition is skewed to polar residues. The tract at residues 1–33 (MDEQIVSASSNVKDGVEKQPVKDREDVDANVVP) is disordered. A compositionally biased stretch (basic and acidic residues) spans 14 to 27 (DGVEKQPVKDREDV). A run of 14 helical transmembrane segments spans residues 43–63 (ISLI…FLGA), 85–105 (AVAW…PLFG), 114–134 (KWLF…CALA), 146–166 (VAGI…ALIV), 177–197 (MIGA…GAIA), 204–224 (WCFW…LFFF), 250–270 (IGAG…QWGG), 280–300 (VVAL…HQYW), 316–336 (GFLL…AALY), 357–377 (MLPI…TISF), 382–402 (APFI…LYTF), 411–431 (IIGY…QAFI), 444–464 (YASA…LCVC), and 518–538 (FLVA…LSWA).

The protein belongs to the major facilitator superfamily. TCR/Tet family.

The protein resides in the membrane. Functionally, MFS-type transporter; part of the diffuse TOX2 gene cluster that mediates the biosynthesis of the HC-toxin, cyclic tetrapeptide of structure cyclo(D-Pro-L-Ala-D-Ala-L-Aeo), where Aeo stands for 2-amino-9,10-epoxi-8-oxodecanoic acid. HC-toxin is a determinant of specificity and virulence in the interaction between the producing fungus and its host, maize. TOXA acts as a HC-toxin efflux pump which contributes to self-protection against HC-toxin and/or the secretion of HC-toxin into the extracellular milieu. The chain is MFS-type transporter TOXA from Cochliobolus carbonum (Maize leaf spot fungus).